A 104-amino-acid chain; its full sequence is ATP-dependent Clp protease adapter protein ClpS (104 aa).

This sequence belongs to the ClpS family. Binds to the N-terminal domain of the chaperone ClpA.

In terms of biological role, involved in the modulation of the specificity of the ClpAP-mediated ATP-dependent protein degradation. The chain is ATP-dependent Clp protease adapter protein ClpS from Burkholderia mallei (strain NCTC 10247).